The sequence spans 305 residues: Transcription factor bHLH18 (305 aa).

Positions 41-67 are disordered; that stretch reads LKTTHISPNLHPFSSSNPPPPKHQPSS. The span at 44-56 shows a compositional bias: polar residues; that stretch reads THISPNLHPFSSS. In terms of domain architecture, bHLH spans 122–171; the sequence is SNAQDHILAERKRREKLTQRFVALSALIPGLKKMDKASVLGDAIKHIKYL. The interval 201-224 is disordered; sequence DENHQPSSSSSSDGNRNSSSSNLP. A compositionally biased stretch (low complexity) spans 207–222; that stretch reads SSSSSSDGNRNSSSSN.

Homodimer. As to expression, expressed in roots.

It is found in the nucleus. This chain is Transcription factor bHLH18 (BHLH18), found in Arabidopsis thaliana (Mouse-ear cress).